The chain runs to 124 residues: Small ribosomal subunit protein uS12 (124 aa).

The interval 1–25 (MATINQLVRKPRQATTYKSASPALD) is disordered. A 3-methylthioaspartic acid modification is found at aspartate 89.

Belongs to the universal ribosomal protein uS12 family. In terms of assembly, part of the 30S ribosomal subunit. Contacts proteins S8 and S17. May interact with IF1 in the 30S initiation complex.

With S4 and S5 plays an important role in translational accuracy. Functionally, interacts with and stabilizes bases of the 16S rRNA that are involved in tRNA selection in the A site and with the mRNA backbone. Located at the interface of the 30S and 50S subunits, it traverses the body of the 30S subunit contacting proteins on the other side and probably holding the rRNA structure together. The combined cluster of proteins S8, S12 and S17 appears to hold together the shoulder and platform of the 30S subunit. This is Small ribosomal subunit protein uS12 from Stenotrophomonas maltophilia (strain R551-3).